The following is a 326-amino-acid chain: Acyl-CoA-binding domain-containing protein 4 (326 aa).

Residues 10–99 (CQKQFQAAVS…MKLVAQKVID (90 aa)) enclose the ACB domain. An acyl-CoA contacts are provided by residues 21-30 (IQNLPKNGSY), 41-45 (YSYYK), lysine 67, and tyrosine 86. 2 disordered regions span residues 147–170 (VQAA…SRLP) and 223–248 (KEAA…SLMG). Position 164 is a phosphoserine (serine 164).

Functionally, binds medium- and long-chain acyl-CoA esters and may function as an intracellular carrier of acyl-CoA esters. This is Acyl-CoA-binding domain-containing protein 4 (Acbd4) from Rattus norvegicus (Rat).